The chain runs to 491 residues: 4,4'-diapolycopen-4-al dehydrogenase (491 aa).

Glu208 is an active-site residue.

The protein belongs to the carotenoid/retinoid oxidoreductase family. CrtN subfamily.

The catalysed reaction is all-trans-4,4'-diapolycopen-4-al + A + H2O = all-trans-4,4'-diapolycopen-4-oate + AH2 + H(+). Its pathway is carotenoid biosynthesis. Its function is as follows. Involved in the biosynthesis of the major C30 carotenoid methyl 4'-[6-O-(acylglycosyl)oxy]-4,4'-diapolycopen-4-oic acid via 4,4'-diapolycopen-4-oic acid intermediate. Catalyzes the oxidation of 4,4'-diapolycopen-4-al to yield 4,4'-diapolycopen-4-oic acid. The protein is 4,4'-diapolycopen-4-al dehydrogenase of Metabacillus indicus (Bacillus indicus).